We begin with the raw amino-acid sequence, 275 residues long: Adenylate kinase 2 (275 aa).

The N-myristoyl glycine moiety is linked to residue glycine 2. The tract at residues 21–30 (KKKEKKKKKK) is required for cell membrane translocation but dispensable for cell membrane localization. 39–44 (GSGKDT) contributes to the ATP binding site. The interval 59-97 (CISKLLKEYKEEYNKENVLNEEENYFDEIEKCMIDGSLV) is NMP. Residues 95 to 97 (SLV), 126 to 129 (GFPR), and glutamine 133 each bind AMP. Arginine 164 is an ATP binding site. The interval 165–214 (IIDPITNISYNENIIQIIKKKREGQELSDKEQKQLIIDNHLYNNLSNDIL) is LID. The AMP site is built by arginine 220 and arginine 231.

It belongs to the adenylate kinase family. Monomer. Oligomer. Heterodimer composed of NMT and AK2; AK2 myristoylation stabilizes the complex. Post-translationally, myristoylation is required for cell membrane localization. In terms of processing, may be palmitoylated at Cys-4 which stabilizes cell membrane localization of the myristoylated protein.

Its subcellular location is the parasitophorous vacuole membrane. The enzyme catalyses AMP + ATP = 2 ADP. In terms of biological role, catalyzes the reversible transfer of the terminal phosphate group between ATP and AMP. Has very low activity with CTP, GTP, ITP and UTP and no activity with GMP, UMP or IMP in vitro. The chain is Adenylate kinase 2 from Plasmodium falciparum (isolate 3D7).